A 607-amino-acid polypeptide reads, in one-letter code: Dopamine receptor 3 (607 aa).

The Extracellular portion of the chain corresponds to 1 to 23; it reads MLAGQHHVTDIESPLMVVLWRVA. Residues 24–44 traverse the membrane as a helical segment; that stretch reads AGVFLPLVPTMAVFGNVLVIM. The Cytoplasmic segment spans residues 45–58; that stretch reads SVFRERSLQTVTNM. Residues 59 to 79 form a helical membrane-spanning segment; that stretch reads LIVSLAVSDFMVAIGVMSFGV. Over 80–96 the chain is Extracellular; the sequence is YYEWNDFKWGLGSFFCH. Residues C95 and C173 are joined by a disulfide bond. A helical membrane pass occupies residues 97–117; sequence VYQALDVACSTASILNLLAIS. Topologically, residues 118–141 are cytoplasmic; the sequence is LDRYIAIGHPISYAQYGARGGRAM. Residues 142–162 traverse the membrane as a helical segment; the sequence is ISITIVWGVSVAVALPLLLGV. Topologically, residues 163–182 are extracellular; it reads NPMEENDLQECELANPYFNM. The chain crosses the membrane as a helical span at residues 183 to 203; the sequence is ISSIFSFFIPCIAMIILYTII. Over 204–523 the chain is Cytoplasmic; sequence FRRLRQRERA…TKQMRREHKA (320 aa). Residues 402-435 form a disordered region; it reads VPSIQDEKKLSQKSNDLPFSHQNGTHKQKLLPNP. Over residues 413–424 the composition is skewed to polar residues; sequence QKSNDLPFSHQN. The chain crosses the membrane as a helical span at residues 524 to 544; sequence TVTLAVVLAVFLFCWLPFFVL. Topologically, residues 545–558 are extracellular; that stretch reads HLSNSICLIIDENS. A helical transmembrane segment spans residues 559–579; that stretch reads ACVGFLPLYLATWLGYLNSSL. At 580-607 the chain is on the cytoplasmic side; the sequence is NPLIYTVFDQRFRNAFRNILSCGIFKKR.

This sequence belongs to the G-protein coupled receptor 1 family. As to expression, expressed in the neurons of the head, ventral cord and tail with weak expression observed in body wall muscles and PVD neurons. In the ventral cord, expressed strongly in GABAergic neurons with weaker expression in cholinergic motor neurons. Expressed in cholinergic SIA neurons and octopaminergic RIC neurons. In males, expressed in the dorsal and ventral spicule protractor and retractor muscles, and the sensory post-cloacal sensilla B (PCB) neuron. Expressed in the head acetylcholine neurons. Expressed in the AVA, AVB, AVD and AVE command interneurons. Expressed in premotor interneurons.

Its subcellular location is the cell membrane. Its function is as follows. G-protein coupled receptor which binds to the neurotransmitter dopamine with high affinity leading to the activation of an associated G-protein and downstream signaling pathways. Couples to G-proteins to inhibit adenylate cyclase (AC) activity and cAMP production. Antagonizes the D1-like dopamine receptor dop-1 to negatively regulate the rate of locomotion. Negatively regulates locomotion through the activation of goa-1 subunit proteins which inactivates the unc-77/nca-1 and nca-2 ion-channels in the command interneurons. Inhibits early-stage swimming by modulating the unc-77/nca-1 and nca-2 ion channels of premotor interneurons. In GABAergic, RIC, and SIA neurons, antagonizes the function of dop-1 to play a role in behavioral plasticity and regulate the decision-making process when conflicting alternatives are present. Antagonizes octopamine signaling in response to food by promoting the dopamine-mediated suppression of crh-1/CREB1 transcription factor activation in cholinergic SIA neurons. This is most likely in association with the G(o)-alpha G-protein subunit goa-1. Promotes male mating behavior by antagonizing acetylcholine signaling to control the protrusion of copulatory spicules from the tail of males during hermaphrodite vulval location. Under mitochondria stress, plays a role in bacterial preference, resulting in learned avoidance behavior. This chain is Dopamine receptor 3, found in Caenorhabditis elegans.